The primary structure comprises 669 residues: Sodium-dependent phosphate transporter (669 aa).

Residues 1–6 (MVTGPD) are Extracellular-facing. Residues 7 to 27 (MLWLVITSGIACFFMAFVTGA) form a helical membrane-spanning segment. The Cytoplasmic segment spans residues 28–47 (NDIANTFSTSIGSKAISIKK). A helical transmembrane segment spans residues 48 to 68 (ALIVAFFFEALGASLLGGTVT). The Extracellular portion of the chain corresponds to 69-86 (DSIRSKIINFQVFYDTPE). A helical membrane pass occupies residues 87-107 (FLMLGMCCALMGATVWLAVAT). Position 108 (Arg-108) is a topological domain, cytoplasmic. Residues 109 to 129 (AGLPVSTTHSIIGALLGFGLA) form a helical membrane-spanning segment. At 130–143 (TGNMKSIKWEKINN) the chain is on the extracellular side. A helical membrane pass occupies residues 144-164 (IVISWLAAPILAGTCSAIAFT). The Cytoplasmic segment spans residues 165-186 (VLRMLILRKKNSFEIIKKMYWF). Residues 187–207 (LIFLITLPFSVFLIFHNPIVI) form a helical membrane-spanning segment. The Extracellular segment spans residues 208-239 (NTQCKMKKDGKVIVSSPCYIEDWSAAHSFYAS). The helical transmembrane segment at 240 to 260 (IICILLSSLLTAIGSFVIYII) threads the bilayer. The Cytoplasmic segment spans residues 261–502 (YNKRINNYNL…YNNGIRGKIK (242 aa)). Positions 311–335 (AHNNTSNGTKQNQVGNGTKSNNNNV) are enriched in polar residues. Disordered stretches follow at residues 311–364 (AHNN…SVEA) and 392–444 (TNMN…KNME). Over residues 342–352 (KNVKSQQDDSK) the composition is skewed to basic and acidic residues. Low complexity predominate over residues 395–433 (NENNNNSNKNNNSNKNNNSNKNNNSNKNNNSNNGNSNEG). A helical transmembrane segment spans residues 503–523 (VQWYILLFGGLSMSLGLSIMG). The Extracellular portion of the chain corresponds to 524 to 542 (YRVIKTVGMKLIKITPARG). Residues 543–563 (FTIELISGLVVLFFSICGIPL) form a helical membrane-spanning segment. At 564–632 (SSTHCAVSSV…TSCVNLRLFR (69 aa)) the chain is on the cytoplasmic side. The helical transmembrane segment at 633-653 (TVFLSWILTVVFSATVTAGIY) threads the bilayer. At 654 to 669 (SFAAYSPSYIMKMQTV) the chain is on the extracellular side.

It belongs to the inorganic phosphate transporter (PiT) (TC 2.A.20) family.

It localises to the cell membrane. The enzyme catalyses 2 Na(+)(out) + phosphate(out) = 2 Na(+)(in) + phosphate(in). Its function is as follows. Sodium-phosphate symporter which preferentially transports the monovalent form of phosphate with a stoichiometry of two sodium ions per phosphate ion. This Plasmodium falciparum protein is Sodium-dependent phosphate transporter.